A 329-amino-acid polypeptide reads, in one-letter code: Phosphate acetyltransferase (329 aa).

This sequence belongs to the phosphate acetyltransferase and butyryltransferase family.

It is found in the cytoplasm. The catalysed reaction is acetyl-CoA + phosphate = acetyl phosphate + CoA. The protein operates within metabolic intermediate biosynthesis; acetyl-CoA biosynthesis; acetyl-CoA from acetate: step 2/2. The polypeptide is Phosphate acetyltransferase (pta) (Staphylococcus epidermidis (strain ATCC 12228 / FDA PCI 1200)).